Consider the following 290-residue polypeptide: MRRPAAVPLLLLLCFGSQRAKAATACGRPRMLNRMVGGQDTQEGEWPWQVSIQRNGSHFCGGSLIAEQWVLTAAHCFRNTSETSLYQVLLGARQLVQPGPHAMYARVRQVESNPLYQGTASSADVALVELEAPVPFTNYILPVCLPDPSVIFETGMNCWVTGWGSPSEEDLLPEPRILQKLAVPIIDTPKCNLLYSKDTEFGYQPKTIKNDMLCAGFEEGKKDACKGDSGGPLVCLVGQSWLQAGVISWGEGCARQNRPGVYIRVTAHHNWIHRIIPKLQFQPARLGGQK.

The N-terminal stretch at 1 to 22 (MRRPAAVPLLLLLCFGSQRAKA) is a signal peptide. The propeptide at 23–34 (ATACGRPRMLNR) is activation peptide. Residues 35 to 277 (MVGGQDTQEG…HHNWIHRIIP (243 aa)) form the Peptidase S1 domain. Residue N55 is glycosylated (N-linked (GlcNAc...) asparagine). C60 and C76 are joined by a disulfide. Residue H75 is the Charge relay system of the active site. An N-linked (GlcNAc...) asparagine glycan is attached at N79. D124 functions as the Charge relay system in the catalytic mechanism. Cystine bridges form between C158–C235, C191–C214, and C225–C253. S229 functions as the Charge relay system in the catalytic mechanism.

It belongs to the peptidase S1 family. In terms of processing, N-glycosylated. As to expression, expressed predominantly in the pancreas.

The protein localises to the secreted. This is Serine protease 27 (PRSS27) from Homo sapiens (Human).